A 263-amino-acid polypeptide reads, in one-letter code: Complement control protein C3 (263 aa).

The signal sequence occupies residues 1-19 (MKVESVTFLTLLGIGCVLS). 4 consecutive Sushi domains span residues 20–83 (CCTI…QCIK), 84–145 (RRCP…ICES), 146–203 (VKCQ…TCQI), and 204–263 (VKCP…KCVR). Intrachain disulfides connect C21-C70, C54-C81, C86-C126, C112-C143, C148-C190, C176-C201, C206-C248, and C234-C261.

This sequence belongs to the receptors of complement activation (RCA) family. As to quaternary structure, heterodimer with A56 protein; disulfide-linked.

The protein localises to the virion membrane. The protein resides in the host cell membrane. It is found in the secreted. In terms of biological role, serves to protect the virus against complement attack by inhibiting both classical and alternative pathways of complement activation. Binds C3b and C4b. This is Complement control protein C3 from Vaccinia virus (strain Copenhagen) (VACV).